Reading from the N-terminus, the 214-residue chain is Putative 3-methyladenine DNA glycosylase (214 aa).

It belongs to the DNA glycosylase MPG family.

This is Putative 3-methyladenine DNA glycosylase from Gloeobacter violaceus (strain ATCC 29082 / PCC 7421).